Reading from the N-terminus, the 606-residue chain is Pickpocket protein 28 (606 aa).

A disordered region spans residues 1–26 (MRTLTESRRRQSGSSGCKKDSESDDD). The next 2 helical transmembrane spans lie at 66 to 86 (IFFG…ISNV) and 490 to 510 (GLLG…FFYI).

Belongs to the amiloride-sensitive sodium channel (TC 1.A.6) family. Expressed in water-sensing neurons in taste bristles on the proboscis but not in carbonation-sensing taste peg neurons (at protein level). Expressed in the tracheal system.

It localises to the cell membrane. In terms of biological role, osmosensitive ion channel that mediates the cellular and behavioral response to water. Plays an essential role in gustatory water reception. Part of a complex that plays a role in tracheal liquid clearance. Probable role in sodium transport. The sequence is that of Pickpocket protein 28 (ppk28) from Drosophila melanogaster (Fruit fly).